Here is a 245-residue protein sequence, read N- to C-terminus: Galectin-3 (245 aa).

The interval 1-30 (MADGFSLNDALAGSGNPNPQGWPGAWGNQP) is disordered. Ala2 is modified (N-acetylalanine). Ser6 bears the Phosphoserine; by CK1 mark. 4 consecutive repeat copies span residues 35 to 43 (YPGASYPGA), 44 to 52 (YPGQAPPGA), 53 to 61 (YPGQAPPGA), and 62 to 70 (YPGPTAPGA). A 7 X 9 AA tandem repeats of Y-P-G-X(3)-P-[GS]-A region spans residues 35 to 99 (YPGASYPGAY…PSAPGAYPAA (65 aa)). The disordered stretch occupies residues 47–68 (QAPPGAYPGQAPPGAYPGPTAP). The 5; approximate repeat unit spans residues 71-78 (YPGPAPGA). The 6; approximate repeat unit spans residues 79-88 (YPGQPGASGA). A 7; approximate repeat occupies 89–99 (YPSAPGAYPAA). In terms of domain architecture, Galectin spans 113–243 (YKLPLAGGVM…DITLTSAAPT (131 aa)). 176 to 182 (WGREERQ) serves as a coordination point for a beta-D-galactoside. A Phosphoserine modification is found at Ser183. The Nuclear export signal motif lies at 221-236 (KNLREINQMEISGDIT).

In terms of assembly, probably forms homo- or heterodimers. Interacts with DMBT1. Interacts with CD6 and ALCAM. Forms a complex with the ITGA3, ITGB1 and CSPG4. Interacts with LGALS3BP, LYPD3, ZFTRAF1 and UACA. Interacts with TRIM16; this interaction mediates autophagy of damage endomembranes. Interacts with cargo receptor TMED10; the interaction mediates the translocation from the cytoplasm into the ERGIC (endoplasmic reticulum-Golgi intermediate compartment) and thereby secretion. Interacts with and inhibits by binding NCR3/NKp30.

It localises to the cytoplasm. It is found in the nucleus. The protein localises to the secreted. Its function is as follows. Galactose-specific lectin which binds IgE. May mediate with the alpha-3, beta-1 integrin the stimulation by CSPG4 of endothelial cells migration. Together with DMBT1, required for terminal differentiation of columnar epithelial cells during early embryogenesis. In the nucleus: acts as a pre-mRNA splicing factor. Involved in acute inflammatory responses including neutrophil activation and adhesion, chemoattraction of monocytes macrophages, opsonization of apoptotic neutrophils, and activation of mast cells. Together with TRIM16, coordinates the recognition of membrane damage with mobilization of the core autophagy regulators ATG16L1 and BECN1 in response to damaged endomembranes. When secreted, interacts with NK cell-activating receptor NCR3/NKp30 acting as an inhibitory ligand which antagonizes NK cell attack. This Cricetulus longicaudatus (Long-tailed dwarf hamster) protein is Galectin-3 (LGALS3).